A 268-amino-acid chain; its full sequence is tRNA pseudouridine synthase A (268 aa).

Asp52 functions as the Nucleophile in the catalytic mechanism. Tyr113 lines the substrate pocket.

Belongs to the tRNA pseudouridine synthase TruA family. In terms of assembly, homodimer.

It carries out the reaction uridine(38/39/40) in tRNA = pseudouridine(38/39/40) in tRNA. Formation of pseudouridine at positions 38, 39 and 40 in the anticodon stem and loop of transfer RNAs. The chain is tRNA pseudouridine synthase A from Chlamydia felis (strain Fe/C-56) (Chlamydophila felis).